Consider the following 334-residue polypeptide: Heat-inducible transcription repressor HrcA (334 aa).

This sequence belongs to the HrcA family.

Functionally, negative regulator of class I heat shock genes (grpE-dnaK-dnaJ and groELS operons). Prevents heat-shock induction of these operons. The protein is Heat-inducible transcription repressor HrcA of Acidovorax sp. (strain JS42).